Here is a 508-residue protein sequence, read N- to C-terminus: Adenylosuccinate synthetase 1, chloroplastic (508 aa).

Residues 1–56 (MNISILRLDSNPITTATSPATATANHRSGILGCYNGTYSCRLNQLQQRKKNPSIIV) constitute a chloroplast transit peptide. Residues 95-101 (GDEGKGK) and 123-125 (GHT) contribute to the GTP site. Asp-96 (proton acceptor) is an active-site residue. Residues Asp-96 and Gly-123 each coordinate Mg(2+). IMP is bound by residues 96 to 99 (DEGK), 121 to 124 (NAGH), Thr-213, Arg-227, Gln-307, Thr-322, and Arg-386. The active-site Proton donor is the His-124. 382–388 (TTTGRPR) contributes to the substrate binding site. GTP is bound by residues Arg-388, 414-416 (KLD), and 497-499 (GIG).

It belongs to the adenylosuccinate synthetase family. As to quaternary structure, homodimer. Requires Mg(2+) as cofactor.

The protein resides in the plastid. It is found in the chloroplast. It carries out the reaction IMP + L-aspartate + GTP = N(6)-(1,2-dicarboxyethyl)-AMP + GDP + phosphate + 2 H(+). It participates in purine metabolism; AMP biosynthesis via de novo pathway; AMP from IMP: step 1/2. Its function is as follows. Plays an important role in the de novo pathway and in the salvage pathway of purine nucleotide biosynthesis. Catalyzes the first committed step in the biosynthesis of AMP from IMP. This Capsicum frutescens (Cayenne pepper) protein is Adenylosuccinate synthetase 1, chloroplastic.